The following is a 395-amino-acid chain: Chalcone synthase (395 aa).

Residue Cys164 is part of the active site.

Belongs to the thiolase-like superfamily. Chalcone/stilbene synthases family.

It carries out the reaction (E)-4-coumaroyl-CoA + 3 malonyl-CoA + 3 H(+) = 2',4,4',6'-tetrahydroxychalcone + 3 CO2 + 4 CoA. It functions in the pathway secondary metabolite biosynthesis; flavonoid biosynthesis. Functionally, the primary product of this enzyme is 4,2',4',6'-tetrahydroxychalcone (also termed naringenin-chalcone or chalcone) which can under specific conditions spontaneously isomerize into naringenin. The polypeptide is Chalcone synthase (CHS) (Betula pendula (European white birch)).